A 1269-amino-acid chain; its full sequence is Protein cramped-like (1269 aa).

Over residues 1–12 the composition is skewed to gly residues; the sequence is MTVKLGDGGSGE. Positions 1–165 are disordered; the sequence is MTVKLGDGGS…GKKVRRQWES (165 aa). Composition is skewed to basic and acidic residues over residues 13 to 24 and 43 to 52; these read DGLKKLGKRAAD and SGTKRDEKTP. Over residues 59–74 the composition is skewed to pro residues; it reads PPAPPGAPQAPSPPQG. Positions 105–123 are enriched in gly residues; sequence GNAGGSGPRGKGAEGGGSS. Residues 124 to 147 show a composition bias toward low complexity; that stretch reads SGNVSGVAPAAPAGGSRSSSRNLG. A compositionally biased stretch (basic and acidic residues) spans 151–165; it reads GEKEEGKKVRRQWES. In terms of domain architecture, SANT spans 161 to 224; sequence RQWESWSTED…FYYRTWHKIT (64 aa). Serine 307 is modified (phosphoserine). 6 disordered regions span residues 450-541, 581-666, 757-827, 976-1034, 1055-1092, and 1115-1157; these read IQSG…PGAL, DTRP…EVPA, VRPA…NDSD, EGLS…DSFQ, IPLS…SQGE, and VPLS…PSDS. Residues 485–507 are compositionally biased toward low complexity; sequence SSGESSPESAPGEGAALSLSSPD. Basic and acidic residues-rich tracts occupy residues 508–518 and 526–535; these read APDRPPPRHQD and TPAEGRDSPT. Composition is skewed to polar residues over residues 757–767, 774–806, and 982–1002; these read VRPAQEEQSMT, TVSS…SSGL, and SPLS…TGTH. Low complexity-rich tracts occupy residues 1055 to 1070 and 1125 to 1140; these read IPLS…LSPP and SDSS…SPQP. A Phosphoserine modification is found at serine 1268.

It belongs to the cramped family.

It is found in the nucleus. This is Protein cramped-like from Homo sapiens (Human).